The primary structure comprises 281 residues: Phosphate import ATP-binding protein PstB 1 (281 aa).

The tract at residues 1-34 (MTENTAETADESSDGGVTATTGAATTTPTTPPEP) is disordered. Positions 15 to 28 (GGVTATTGAATTTP) are enriched in low complexity. Residues 36 to 276 (IRARDLDVFY…PEHQRVEEYI (241 aa)) enclose the ABC transporter domain. 68–75 (GPSGCGKS) serves as a coordination point for ATP.

This sequence belongs to the ABC transporter superfamily. Phosphate importer (TC 3.A.1.7) family. The complex is composed of two ATP-binding proteins (PstB), two transmembrane proteins (PstC and PstA) and a solute-binding protein (PstS).

It is found in the cell membrane. It carries out the reaction phosphate(out) + ATP + H2O = ADP + 2 phosphate(in) + H(+). Its function is as follows. Part of the ABC transporter complex PstSACB involved in phosphate import. Responsible for energy coupling to the transport system. This is Phosphate import ATP-binding protein PstB 1 from Halobacterium salinarum (strain ATCC 700922 / JCM 11081 / NRC-1) (Halobacterium halobium).